Here is a 239-residue protein sequence, read N- to C-terminus: Ribonuclease HII (239 aa).

The 214-residue stretch at 18-231 (KIIVGLDEAG…SKNLLKEIEE (214 aa)) folds into the RNase H type-2 domain. Positions 24, 25, and 125 each coordinate a divalent metal cation.

The protein belongs to the RNase HII family. The cofactor is Mn(2+). Mg(2+) is required as a cofactor.

The protein resides in the cytoplasm. The enzyme catalyses Endonucleolytic cleavage to 5'-phosphomonoester.. Functionally, endonuclease that specifically degrades the RNA of RNA-DNA hybrids. The chain is Ribonuclease HII from Methanococcus maripaludis (strain C7 / ATCC BAA-1331).